A 307-amino-acid chain; its full sequence is Dihydroorotate dehydrogenase B (NAD(+)), catalytic subunit (307 aa).

Residues Ser-20 and 44–45 (KT) contribute to the FMN site. Residues Lys-44 and 68-72 (NSIGL) each bind substrate. FMN contacts are provided by Asn-98 and Asn-126. Asn-126 contacts substrate. Cys-129 acts as the Nucleophile in catalysis. Lys-164 and Ile-190 together coordinate FMN. 191-192 (NT) contributes to the substrate binding site. Residues Gly-216, 242–243 (GG), and 264–265 (GS) contribute to the FMN site.

The protein belongs to the dihydroorotate dehydrogenase family. Type 1 subfamily. As to quaternary structure, heterotetramer of 2 PyrK and 2 PyrD type B subunits. It depends on FMN as a cofactor.

It localises to the cytoplasm. The catalysed reaction is (S)-dihydroorotate + NAD(+) = orotate + NADH + H(+). It functions in the pathway pyrimidine metabolism; UMP biosynthesis via de novo pathway; orotate from (S)-dihydroorotate (NAD(+) route): step 1/1. In terms of biological role, catalyzes the conversion of dihydroorotate to orotate with NAD(+) as electron acceptor. In Carboxydothermus hydrogenoformans (strain ATCC BAA-161 / DSM 6008 / Z-2901), this protein is Dihydroorotate dehydrogenase B (NAD(+)), catalytic subunit (pyrD).